The following is a 444-amino-acid chain: MPSHFDTVQLHAGQENPGDNAHRSRAVPIYATTSYVFENSKHGSQLFGLEVPGYVYSRFQNPTSNVLEERIAALEGGAAALAVSSGQAAQTLAIQGLAHTGDNIVSTSYLYGGTYNQFKISFKRFGIEARFVEGDNPEEFEKVFDERTKAVYLETIGNPKYNVPDFEKIVAIAHKHGIPVVVDNTFGAGGYFCQPIKYGADIVTHSATKWIGGHGTTIGGIIVDSGKFPWKDYPEKFPQFSQPAEGYHGTIYNEAYGNLAYIVHVRTELLRDLGPLMNPFASFLLLQGVETLSLRAERHGENALKLAKWLEQSPYVSWVSYPGLASHSHHENAKKYLSNGFGGVLSFGVKDLPNADKETDPFKLSGAQVVDNLKLASNLANVGDAKTLVIAPYFTTHKQLNDKEKLASGVTKDLIRVSVGIEFIDDIIADFQQSFETVFAGQKP.

Ser-44 bears the Phosphoserine mark. A Glycyl lysine isopeptide (Lys-Gly) (interchain with G-Cter in ubiquitin) cross-link involves residue Lys-160. Lys-209 bears the N6-(pyridoxal phosphate)lysine mark.

It belongs to the trans-sulfuration enzymes family. Homotetramer. The cofactor is pyridoxal 5'-phosphate.

The protein resides in the cytoplasm. The enzyme catalyses O-acetyl-L-homoserine + methanethiol = L-methionine + acetate + H(+). The catalysed reaction is O-acetyl-L-homoserine + hydrogen sulfide = L-homocysteine + acetate. It carries out the reaction O-acetyl-L-serine + hydrogen sulfide = L-cysteine + acetate. The protein operates within amino-acid biosynthesis; L-methionine biosynthesis via de novo pathway; L-homocysteine from O-acetyl-L-homoserine. Catalyzes the conversion of O-acetyl-L-homoserine (OAH) into homocysteine in the methionine biosynthesis pathway. Required to efficiently reduce toxic levels of hydrogen sulfide generated when the sulfate assimilation pathway (SAP) is active. Also catalyzes the conversion of O-acetylserine (OAS) into cysteine, the last step in the cysteine biosynthesis pathway. However, it seems that in S.cerevisiae cysteine biosynthesis occurs exclusively through the cystathionine pathway and not via direct incorporation of sulfur into OAS. It therefore has no metabolic role in cysteine biosynthesis and may only have a regulatory role controlling OAS levels. In Saccharomyces cerevisiae (strain ATCC 204508 / S288c) (Baker's yeast), this protein is Homocysteine/cysteine synthase.